The sequence spans 138 residues: Ribosomal RNA large subunit methyltransferase H (138 aa).

Residues Leu57, Gly86, and 105–110 (LSPLTF) each bind S-adenosyl-L-methionine.

The protein belongs to the RNA methyltransferase RlmH family. In terms of assembly, homodimer.

The protein localises to the cytoplasm. The enzyme catalyses pseudouridine(1915) in 23S rRNA + S-adenosyl-L-methionine = N(3)-methylpseudouridine(1915) in 23S rRNA + S-adenosyl-L-homocysteine + H(+). In terms of biological role, specifically methylates the pseudouridine at position 1915 (m3Psi1915) in 23S rRNA. This chain is Ribosomal RNA large subunit methyltransferase H, found in Prochlorococcus marinus (strain MIT 9312).